A 413-amino-acid polypeptide reads, in one-letter code: DNA primase DnaG (413 aa).

Positions 168–246 (PNLIIVEGRA…KIDYVARAPV (79 aa)) constitute a Toprim domain. Mg(2+) is bound by residues Glu-174, Asp-219, and Asp-221.

The protein belongs to the archaeal DnaG primase family. Forms a ternary complex with MCM helicase and DNA. Component of the archaeal exosome complex. Mg(2+) serves as cofactor.

The catalysed reaction is ssDNA + n NTP = ssDNA/pppN(pN)n-1 hybrid + (n-1) diphosphate.. Functionally, RNA polymerase that catalyzes the synthesis of short RNA molecules used as primers for DNA polymerase during DNA replication. Also part of the exosome, which is a complex involved in RNA degradation. Acts as a poly(A)-binding protein that enhances the interaction between heteromeric, adenine-rich transcripts and the exosome. The polypeptide is DNA primase DnaG (Metallosphaera sedula (strain ATCC 51363 / DSM 5348 / JCM 9185 / NBRC 15509 / TH2)).